A 152-amino-acid chain; its full sequence is Snaclec 5 (152 aa).

The first 23 residues, 1-23, serve as a signal peptide directing secretion; it reads MGRFIFLSSGLLVVFLSLSGTGA. Disulfide bonds link C27–C38, C55–C148, and C123–C140. The C-type lectin domain occupies 34–149; that stretch reads YGQHCYRAFK…CASHNPFVCK (116 aa).

Belongs to the snaclec family. As to quaternary structure, heterodimer; disulfide-linked. In terms of tissue distribution, expressed by the venom gland.

The protein localises to the secreted. Its function is as follows. Interferes with one step of hemostasis (modulation of platelet aggregation, or coagulation cascade, for example). This Bitis arietans (African puff adder) protein is Snaclec 5.